Reading from the N-terminus, the 419-residue chain is Gamma-glutamyl phosphate reductase (419 aa).

Belongs to the gamma-glutamyl phosphate reductase family.

The protein localises to the cytoplasm. It carries out the reaction L-glutamate 5-semialdehyde + phosphate + NADP(+) = L-glutamyl 5-phosphate + NADPH + H(+). It participates in amino-acid biosynthesis; L-proline biosynthesis; L-glutamate 5-semialdehyde from L-glutamate: step 2/2. In terms of biological role, catalyzes the NADPH-dependent reduction of L-glutamate 5-phosphate into L-glutamate 5-semialdehyde and phosphate. The product spontaneously undergoes cyclization to form 1-pyrroline-5-carboxylate. In Bordetella avium (strain 197N), this protein is Gamma-glutamyl phosphate reductase.